Here is a 200-residue protein sequence, read N- to C-terminus: MAKVLVLYYSSYGHVETMAQHVAEGAKSVPGVEVTLKRVPETIPADQAKAIGVKVDQAAPVATVDELPNYDAIIFGTPTRFGNMAGQMRTFLDQTGCLWMKGALVGKIGSVFASTGTQHGGQETTITSFHTTLLHQGMVIVGVPYACSGLVNMSEITGGTPYGATTLAGADGSRQPSANELDIARYQGKHVAELAVKLAS.

In terms of domain architecture, Flavodoxin-like spans 4–191; sequence VLVLYYSSYG…DIARYQGKHV (188 aa). Residues 10–15 and 79–81 contribute to the FMN site; these read SSYGHV and TRF. Y12 provides a ligand contact to NAD(+). W99 contacts substrate. FMN contacts are provided by residues 114–120 and H135; that span reads STGTQHG.

The protein belongs to the WrbA family. FMN is required as a cofactor.

It carries out the reaction a quinone + NADH + H(+) = a quinol + NAD(+). It catalyses the reaction a quinone + NADPH + H(+) = a quinol + NADP(+). This Burkholderia ambifaria (strain MC40-6) protein is NAD(P)H dehydrogenase (quinone).